The chain runs to 488 residues: Glutamyl-tRNA(Gln) amidotransferase subunit A (488 aa).

Catalysis depends on charge relay system residues lysine 77 and serine 152. Serine 176 serves as the catalytic Acyl-ester intermediate.

It belongs to the amidase family. GatA subfamily. In terms of assembly, heterotrimer of A, B and C subunits.

The catalysed reaction is L-glutamyl-tRNA(Gln) + L-glutamine + ATP + H2O = L-glutaminyl-tRNA(Gln) + L-glutamate + ADP + phosphate + H(+). In terms of biological role, allows the formation of correctly charged Gln-tRNA(Gln) through the transamidation of misacylated Glu-tRNA(Gln) in organisms which lack glutaminyl-tRNA synthetase. The reaction takes place in the presence of glutamine and ATP through an activated gamma-phospho-Glu-tRNA(Gln). This Streptococcus pneumoniae (strain 70585) protein is Glutamyl-tRNA(Gln) amidotransferase subunit A.